Here is a 204-residue protein sequence, read N- to C-terminus: Proteasome subunit beta 2 (204 aa).

A propeptide spans 1-6 (removed in mature form; by autocatalysis); that stretch reads MEVLPG. The Nucleophile role is filled by T7.

It belongs to the peptidase T1B family. The 20S proteasome core is composed of 14 alpha and 14 beta subunits that assemble into four stacked heptameric rings, resulting in a barrel-shaped structure. The two inner rings, each composed of seven catalytic beta subunits, are sandwiched by two outer rings, each composed of seven alpha subunits. The catalytic chamber with the active sites is on the inside of the barrel. Has a gated structure, the ends of the cylinder being occluded by the N-termini of the alpha-subunits. Is capped at one or both ends by the proteasome regulatory ATPase, PAN.

The protein localises to the cytoplasm. It catalyses the reaction Cleavage of peptide bonds with very broad specificity.. Its activity is regulated as follows. The formation of the proteasomal ATPase PAN-20S proteasome complex, via the docking of the C-termini of PAN into the intersubunit pockets in the alpha-rings, triggers opening of the gate for substrate entry. Interconversion between the open-gate and close-gate conformations leads to a dynamic regulation of the 20S proteasome proteolysis activity. Component of the proteasome core, a large protease complex with broad specificity involved in protein degradation. The protein is Proteasome subunit beta 2 of Thermofilum pendens (strain DSM 2475 / Hrk 5).